A 463-amino-acid polypeptide reads, in one-letter code: Cysteine--tRNA ligase (463 aa).

Cys30 is a Zn(2+) binding site. A 'HIGH' region motif is present at residues 32 to 42; sequence MTVYDYCHVGH. Zn(2+) is bound by residues Cys214, His239, and Glu243. The short motif at 271 to 275 is the 'KMSKS' region element; the sequence is KMSKS. Position 274 (Lys274) interacts with ATP.

This sequence belongs to the class-I aminoacyl-tRNA synthetase family. In terms of assembly, monomer. Zn(2+) serves as cofactor.

It is found in the cytoplasm. The enzyme catalyses tRNA(Cys) + L-cysteine + ATP = L-cysteinyl-tRNA(Cys) + AMP + diphosphate. The sequence is that of Cysteine--tRNA ligase from Ralstonia pickettii (strain 12J).